Consider the following 687-residue polypeptide: Probable intron-encoded endonuclease aI3 (687 aa).

The COX1 exons 1 to 3 encoded stretch occupies residues 1 to 374 (MKQMSYVTRW…NASMDVAFHD (374 aa)). The next 10 helical transmembrane spans lie at 19-39 (IGMT…GMSV), 69-89 (LLMM…NFFL), 103-123 (LNNI…CSVL), 152-172 (AMFA…NFMV), 188-208 (PLFA…LPVL), 240-260 (LFWF…FGVM), 273-293 (FGEM…FLVW), 315-335 (MVIA…IYGG), 341-361 (VPML…LTGV), and 376-396 (IFIY…NNYT). A COX1 intron 3 encoded region spans residues 375–687 (RIFIYYVSFF…KKESLMKFLK (313 aa)).

The protein in the C-terminal section; belongs to the LAGLIDADG endonuclease family. In the N-terminal section; belongs to the heme-copper respiratory oxidase family. In terms of processing, the mature protein may arise from proteolytic cleavage of an in-frame translation of COX1 exons 1 to 3 plus intron 3, containing the aI3 open reading frame.

It is found in the mitochondrion. The protein localises to the membrane. Mitochondrial DNA endonuclease involved in intron homing. This chain is Probable intron-encoded endonuclease aI3 (aI3), found in Debaryomyces hansenii (strain ATCC 36239 / CBS 767 / BCRC 21394 / JCM 1990 / NBRC 0083 / IGC 2968) (Yeast).